The following is a 301-amino-acid chain: Sulfate adenylyltransferase subunit 2 (301 aa).

The interval 282–301 (RLIDRDEAGSMEKKKREGYF) is disordered.

Belongs to the PAPS reductase family. CysD subfamily. In terms of assembly, heterodimer composed of CysD, the smaller subunit, and CysN.

The enzyme catalyses sulfate + ATP + H(+) = adenosine 5'-phosphosulfate + diphosphate. The protein operates within sulfur metabolism; hydrogen sulfide biosynthesis; sulfite from sulfate: step 1/3. Functionally, with CysN forms the ATP sulfurylase (ATPS) that catalyzes the adenylation of sulfate producing adenosine 5'-phosphosulfate (APS) and diphosphate, the first enzymatic step in sulfur assimilation pathway. APS synthesis involves the formation of a high-energy phosphoric-sulfuric acid anhydride bond driven by GTP hydrolysis by CysN coupled to ATP hydrolysis by CysD. The protein is Sulfate adenylyltransferase subunit 2 of Chelativorans sp. (strain BNC1).